Consider the following 66-residue polypeptide: MSKVIRVRYEKGVLKPLEPVNLEDGEEVDIIIRENLAELARRIRRRLSQEREEPSEILSRERSRLA.

Belongs to the UPF0165 family.

In terms of biological role, possibly the antitoxin component of a type II toxin-antitoxin (TA) system. This Aeropyrum pernix (strain ATCC 700893 / DSM 11879 / JCM 9820 / NBRC 100138 / K1) protein is Putative antitoxin APE_0279a.1.